Reading from the N-terminus, the 837-residue chain is CoA-transferase/lyase DddD (837 aa).

The Nucleophile role is filled by D602.

It belongs to the CoA-transferase III family.

Dimethyl sulfide (DMS)-producing enzyme. Acts both as a transferase and a lyase: uses acetyl-coenzyme A (acetyl-coA) and dimethylsulfoniopropionate (DMSP) as substrates to produce DMS, acetate and 3-hydroxypropionate-CoA (3HP-CoA). Mediates the CoA-transferase prior to lyase activity. DMS is the principal form by which sulfur is transported from oceans to the atmosphere and is a key component of the ocean sulfur cycle. This chain is CoA-transferase/lyase DddD, found in Marinomonas sp. (strain MWYL1).